Here is a 280-residue protein sequence, read N- to C-terminus: Threonylcarbamoyl-AMP synthase (280 aa).

A mitochondrion-targeting transit peptide spans 1-56; it reads MSTARPCAGLRAAVAAGMGLSDGPAGSSRGCRLLRPPAPAPALPGARLLRLPESEA. The residue at position 61 (serine 61) is a Phosphoserine. The region spanning 68–258 is the YrdC-like domain; sequence TEALRAAVAE…KFGIIRSGCA (191 aa).

This sequence belongs to the SUA5 family. In terms of assembly, interacts with RSC1A1.

Its subcellular location is the cytoplasm. The protein localises to the mitochondrion. It localises to the cell membrane. The catalysed reaction is L-threonine + hydrogencarbonate + ATP = L-threonylcarbamoyladenylate + diphosphate + H2O. Functionally, cytoplasmic and mitochondrial threonylcarbamoyl-AMP synthase required for the formation of a threonylcarbamoyl group on adenosine at position 37 (t(6)A37) in tRNAs that read codons beginning with adenine. Catalyzes the conversion of L-threonine, HCO(3)(-)/CO(2) and ATP to give threonylcarbamoyl-AMP (TC-AMP) as the acyladenylate intermediate, with the release of diphosphate. Participates in t(6)A37 formation in cytoplasmic and mitochondrial tRNAs. May regulate the activity of some transporters. The chain is Threonylcarbamoyl-AMP synthase from Rattus norvegicus (Rat).